Here is a 127-residue protein sequence, read N- to C-terminus: Small ribosomal subunit protein uS11 (127 aa).

This sequence belongs to the universal ribosomal protein uS11 family. In terms of assembly, part of the 30S ribosomal subunit. Interacts with proteins S7 and S18. Binds to IF-3.

Functionally, located on the platform of the 30S subunit, it bridges several disparate RNA helices of the 16S rRNA. Forms part of the Shine-Dalgarno cleft in the 70S ribosome. This is Small ribosomal subunit protein uS11 from Chlorobium phaeobacteroides (strain BS1).